Here is a 927-residue protein sequence, read N- to C-terminus: MDGFAGSLDDSVSAASTSDVQDRLSALELRVQQQEDEITVLKAALADVLRRLAISEDQVATVRKAVPSKGPATLREALSMSCITNGGAGTRKPSHASSVAKKDTLSSAAKSVKRSSTLEKSHNSWDASEESRNKLMRAASTSKLTSKVSKATDKHKDIVISPEGEYIKMFMRGRPITMFIPSDVENYDDVRTELPPEKLKLEWVFGYRGRDCRANVYLLPTGEIVYFIASVVVLFNYEERTQRHYLGHTDCVKCIAVHPDKIRIATGQIAGVDKDGRPLQPHVRVWDSVSLSTLQVIGLGTFERGVGCLAFSKADSGVHLSVIDDSNEHMLTVWDWQKKSKIAEIKTTNEVVLAVEFHPTDAGTIVTCGKSHIFFWTWSGNSLARKQGIFGKYEKPKFVQCLAFLANGDVLAGDSGGIMLIWSKTNVESTASKGAKVLGVYQISKQIKAHDGSVFTLCQMRNGMLLTGGGKDRKVIMWDHDLNPEREIEVPDQYGTIRAVAEGKGDQFLVGTSRNFILRGTFNDGFQVEVQGHTDELWGLATHPFKDLLLTCAQDKQVCLWNSVDHSLEWTRVLDEPGHCADFHPTGTVVAIGTHSGRWFVLDAETRDLVSIHTDGNEQLSVMRYSVDGALLAVGSHDNFIYLYNVSENGRKYSRYGKCTGHSSYITHLDWSPDNQYIMSNSGDYEILYWDIPSGCKLIRNRSECKDINWTTYTCVLGFQVFGVWPEGSDGTDINALVRSHNRKVIALADDFCKVHLFQYPCSKPKAPSHKYSAHSSHVTNVSFTHNDGHLISTGGKDMSIMQWRLIEKVSHSQNDNIAESSSAVNSPVVSEKVLQPDTPTTLPQAVNKATEVEQTPAESMAPPEDALELEAQQPQDLDDVQSGKSSPLPEEANGQEPSDEVIEEPANSQIVDAQDENQDDDDAPLS.

Positions 1-189 (MDGFAGSLDD…IPSDVENYDD (189 aa)) are microtubule-binding. Residues 14–63 (AASTSDVQDRLSALELRVQQQEDEITVLKAALADVLRRLAISEDQVATVR) adopt a coiled-coil conformation. Residues 85–132 (NGGAGTRKPSHASSVAKKDTLSSAAKSVKRSSTLEKSHNSWDASEESR) form a disordered region. Over residues 116 to 132 (STLEKSHNSWDASEESR) the composition is skewed to basic and acidic residues. WD repeat units lie at residues 199 to 237 (LKLEWVFGYRGRDCRANVYLLPTGEIVYFIASVVVLFNY), 241 to 288 (TQRH…VWDS), 296 to 336 (VIGL…VWDW), 343 to 378 (AEIKTTNEVVLAVEFHPTDAGTIVTCGKSHIFFWTW), 385 to 424 (RKQGIFGKYEKPKFVQCLAFLANGDVLAGDSGGIMLIWSK), 442 to 480 (QISKQIKAHDGSVFTLCQMRNGMLLTGGGKDRKVIMWDH), 485 to 521 (EREIEVPDQYGTIRAVAEGKGDQFLVGTSRNFILRGT), 524 to 563 (DGFQVEVQGHTDELWGLATHPFKDLLLTCAQDKQVCLWNS), 567 to 604 (SLEWTRVLDEPGHCADFHPTGTVVAIGTHSGRWFVLDA), 610 to 646 (VSIHTDGNEQLSVMRYSVDGALLAVGSHDNFIYLYNV), 653 to 692 (YSRYGKCTGHSSYITHLDWSPDNQYIMSNSGDYEILYWDI), 702 to 760 (RSEC…LFQY), and 767 to 806 (APSHKYSAHSSHVTNVSFTHNDGHLISTGGKDMSIMQWRL). Positions 815-829 (NDNIAESSSAVNSPV) are enriched in polar residues. Residues 815 to 927 (NDNIAESSSA…NQDDDDAPLS (113 aa)) form a disordered region. Over residues 914-927 (AQDENQDDDDAPLS) the composition is skewed to acidic residues.

It belongs to the WD repeat EMAP family. Homotrimer; self-association is mediated by the N-terminal coiled coil.

It is found in the cytoplasm. Its subcellular location is the cytoskeleton. The protein resides in the spindle. The protein localises to the microtubule organizing center. It localises to the midbody. Functionally, essential for the formation and stability of microtubules (MTs). Required for the organization of the mitotic spindle and for the proper attachment of kinetochores to MTs. Promotes the recruitment of NUDC to the mitotic spindle for mitotic progression. This is Echinoderm microtubule-associated protein-like 4 (eml4) from Xenopus laevis (African clawed frog).